Here is a 1365-residue protein sequence, read N- to C-terminus: Homeotic protein spalt-major (1365 aa).

3 disordered regions span residues 47–194, 270–298, and 322–363; these read SADK…EVTL, QAKQ…EEEE, and LINA…NTHK. 2 stretches are compositionally biased toward low complexity: residues 63–76 and 87–99; these read SPLT…SPSR and EQST…PEQS. The span at 103–117 shows a compositional bias: basic and acidic residues; sequence HQLENDIKSEAKSEI. Residues 146 to 157 are compositionally biased toward low complexity; sequence PSSPVAEASAEE. Basic and acidic residues predominate over residues 159–181; it reads ATERTPEKEKEKDVEVDVEKPDE. The segment covering 275–298 has biased composition (acidic residues); it reads EDTEEDADQEQDQEQETDTYEEEE. Residues 346–363 are compositionally biased toward basic and acidic residues; it reads HDHESQPNRRPSLDNTHK. 2 C2H2-type zinc fingers span residues 451–473 and 479–501; these read HRCR…IRSH and FKCN…FQRH. 2 disordered regions span residues 508–554 and 586–716; these read VPMN…ASFP and ELPT…TPGQ. Over residues 530 to 539 the composition is skewed to polar residues; sequence MSPTDSSPNH. Over residues 540–554 the composition is skewed to pro residues; the sequence is SPAPPPLGSAPASFP. 2 stretches are compositionally biased toward basic and acidic residues: residues 603–622 and 638–662; these read PQVK…HEQE and VRIK…EPRR. 2 positions are modified to phosphoserine: Ser-739 and Ser-744. Residues 740–772 are disordered; that stretch reads PEHHSPVRSPAGGALPPGVPPPPHHHPHHMARS. 3 consecutive C2H2-type zinc fingers follow at residues 824–846, 852–874, and 884–906; these read NQCV…YRTH, FKCR…MAVH, and HQCP…IRLH. Disordered stretches follow at residues 948-1012, 1030-1129, and 1146-1241; these read ALPG…RSGD, VVNT…ILTS, and HHLQ…GARP. Residues 976–991 are compositionally biased toward acidic residues; that stretch reads DMDDNMDCGEDYDDDV. Residues 1040-1054 show a composition bias toward low complexity; that stretch reads SSASSHGHSVGSTSA. Residues 1055–1079 are compositionally biased toward polar residues; it reads PTSPSVHASSQVIKRSSSPARSEAS. Phosphoserine is present on residues Ser-1076 and Ser-1079. Composition is skewed to low complexity over residues 1085-1100, 1114-1123, and 1146-1168; these read LTPR…SRSP, RSPSGSSHAS, and HHLQ…AAAA. The span at 1181-1191 shows a compositional bias: basic and acidic residues; it reads QHQEQLRREAA. Residues 1192 to 1218 are compositionally biased toward low complexity; it reads EAQQKAAAAAAAAAAAAAAQRQTPPQA. 2 C2H2-type zinc fingers span residues 1289–1311 and 1317–1339; these read TTCG…YRSH and FKCS…MLTH.

It belongs to the sal C2H2-type zinc-finger protein family.

Its subcellular location is the nucleus. Its function is as follows. Required for the establishment of the posterior-most head and the anterior-most tail segments of the embryo. Probably function as a transcriptional regulator. Could repress the transcription of the tsh gene. The chain is Homeotic protein spalt-major (salm) from Drosophila melanogaster (Fruit fly).